The chain runs to 488 residues: Leucine-rich repeat-containing protein 74A (488 aa).

8 LRR repeats span residues 134-155, 162-182, 191-212, 219-239, 247-268, 275-296, 303-324, and 331-351; these read AVTKLELEDNCIMEEGVLSLVE, YLQEMNISNNHLGLEGARIIS, SIWSLELSGNDFKEDSAALLCQ, QIKKLDLSHNQFSDVGGEHLG, GLTSLDLSWNNFHTRGAVALCN, TLTKLDLSMNGFGNEVALALGE, CLVYLDIGGNDIGNEGASKISK, and SLRVLKLFLNPINMDGAILLI.

This chain is Leucine-rich repeat-containing protein 74A, found in Homo sapiens (Human).